Here is a 479-residue protein sequence, read N- to C-terminus: Heparin cofactor 2 (479 aa).

An N-terminal signal peptide occupies residues 1-23 (MKHPAYTLLLSLIMSMCAGSKGL). Residue N31 is glycosylated (N-linked (GlcNAc...) asparagine). A run of 2 repeats spans residues 55–65 (GEEDDDYLDLE) and 69–79 (SEDDDYIYVVD). The segment at 55–79 (GEEDDDYLDLEKLLSEDDDYIYVVD) is 2 X 11 AA approximate repeats, Asp/Glu-rich (acidic) (hirudin-like). Residues Y61 and Y74 each carry the sulfotyrosine modification. N168 carries an N-linked (GlcNAc...) asparagine glycan. Residues 172–192 (KYEVTTIHNLFRKLTHRLFRR) form a glycosaminoglycan-binding site region. Residues N367 and N403 are each glycosylated (N-linked (GlcNAc...) asparagine).

This sequence belongs to the serpin family. In terms of processing, different composition of the N-linked oligosaccharides appears to yield a 68-kDa and a 72-kDa form.

In terms of biological role, thrombin inhibitor activated by the glycosaminoglycans, heparin or dermatan sulfate. In the presence of the latter, HC-II becomes the predominant thrombin inhibitor in place of antithrombin III (AT). The sequence is that of Heparin cofactor 2 (Serpind1) from Rattus norvegicus (Rat).